The following is a 715-amino-acid chain: Serine/arginine repetitive matrix protein 5 (715 aa).

The span at 1 to 13 (MSSPKRSSKPSMS) shows a compositional bias: low complexity. The interval 1 to 715 (MSSPKRSSKP…RSSSSSSKLA (715 aa)) is disordered. Positions 32 to 59 (LKSTKSATPNRSLVPTKPATSRNSVMSP) are enriched in polar residues. The span at 60-79 (SSSKSTKSTSTKRAPSNRPS) shows a compositional bias: low complexity. The span at 80-90 (SRSRVRSKART) shows a compositional bias: basic residues. Positions 92 to 104 (SRVSTDTRTSKAS) are enriched in polar residues. Basic residues predominate over residues 112–136 (HQRRGTHSRGRTPGRRGSRSSKRSP). 2 stretches are compositionally biased toward polar residues: residues 213–224 (TPSTAKCQTPTG) and 257–272 (YSPTEMSSRVKSYNQA). Residues 273–285 (STRSRPQSHSQSR) show a composition bias toward low complexity. Positions 286 to 320 (SPRRSRSGSQKRTHSRVRSHSWKRNHSRARSRTRK) are enriched in basic residues. Composition is skewed to basic and acidic residues over residues 359–388 (PSKERSHSHSRSSSKERDHRGSSSPRKESG) and 397–521 (KQRD…ERDH). The segment covering 522–536 (RRSRSPSKERQRRQS) has biased composition (basic residues). Composition is skewed to basic and acidic residues over residues 539 to 595 (PNKE…DHSR) and 611 to 628 (SSKEKAHSRSRTPSKEGN). Positions 657–666 (TRTSSLSQNR) are enriched in polar residues. The segment covering 667-681 (TPSKTSSHSPSTFPS) has biased composition (low complexity). The span at 682–715 (GGQTLSQDDSQADATTSKATLPGERSSSSSSKLA) shows a compositional bias: polar residues.

The sequence is that of Serine/arginine repetitive matrix protein 5 (SRRM5) from Homo sapiens (Human).